The chain runs to 144 residues: Ribonuclease H (144 aa).

The 141-residue stretch at methionine 1–aspartate 141 folds into the RNase H type-1 domain. Residues aspartate 9, glutamate 47, aspartate 69, and aspartate 133 each contribute to the Mg(2+) site.

It belongs to the RNase H family. In terms of assembly, monomer. Requires Mg(2+) as cofactor.

Its subcellular location is the cytoplasm. It catalyses the reaction Endonucleolytic cleavage to 5'-phosphomonoester.. In terms of biological role, endonuclease that specifically degrades the RNA of RNA-DNA hybrids. The sequence is that of Ribonuclease H from Erythrobacter litoralis (strain HTCC2594).